We begin with the raw amino-acid sequence, 154 residues long: Probable prefoldin subunit 5 (154 aa).

It belongs to the prefoldin subunit alpha family. In terms of assembly, heterohexamer of two PFD-alpha type and four PFD-beta type subunits. Interacts with byr1.

It is found in the cytoplasm. Its function is as follows. Binds specifically to cytosolic chaperonin (c-CPN) and transfers target proteins to it. Binds to nascent polypeptide chain and promotes folding in an environment in which there are many competing pathways for nonnative proteins. Required for normal cytoskeletal function and when bound to byr1, is involved in the regulation of sexual differentiation. The sequence is that of Probable prefoldin subunit 5 (bob1) from Schizosaccharomyces pombe (strain 972 / ATCC 24843) (Fission yeast).